Consider the following 187-residue polypeptide: ATP synthase subunit b, chloroplastic (187 aa).

A helical transmembrane segment spans residues 34–56; the sequence is IINLSVVLGLVFTLGRNFLISLL.

Belongs to the ATPase B chain family. F-type ATPases have 2 components, F(1) - the catalytic core - and F(0) - the membrane proton channel. F(1) has five subunits: alpha(3), beta(3), gamma(1), delta(1), epsilon(1). F(0) has four main subunits: a(1), b(1), b'(1) and c(10-14). The alpha and beta chains form an alternating ring which encloses part of the gamma chain. F(1) is attached to F(0) by a central stalk formed by the gamma and epsilon chains, while a peripheral stalk is formed by the delta, b and b' chains.

It localises to the plastid. Its subcellular location is the chloroplast thylakoid membrane. In terms of biological role, f(1)F(0) ATP synthase produces ATP from ADP in the presence of a proton or sodium gradient. F-type ATPases consist of two structural domains, F(1) containing the extramembraneous catalytic core and F(0) containing the membrane proton channel, linked together by a central stalk and a peripheral stalk. During catalysis, ATP synthesis in the catalytic domain of F(1) is coupled via a rotary mechanism of the central stalk subunits to proton translocation. Component of the F(0) channel, it forms part of the peripheral stalk, linking F(1) to F(0). The polypeptide is ATP synthase subunit b, chloroplastic (Pleurastrum terricola (Filamentous green alga)).